Here is a 371-residue protein sequence, read N- to C-terminus: SufE-like protein 1, chloroplastic/mitochondrial (371 aa).

A chloroplast and mitochondrion-targeting transit peptide spans 1–66 (MAAAMSSSCC…ISTGIVPPPS (66 aa)). C131 serves as the catalytic Cysteine persulfide intermediate. Residue C131 is modified to S-glutathionyl cysteine. Residues 218–249 (VKGEEDSSSGESSESSFVSIPETKDEANVPEV) form a disordered region.

This sequence belongs to the SufE family. In terms of assembly, heterotetramer with NFS2. Interacts with NFS2 and NIFS1. Interacts in vitro with GRXS14, GRXS15, GRXS16 and GRXS17, but not with GRXC5. Interacts in vivo only with GRXS14 and GRXS16. Post-translationally, glutathionylated. Glutathionylation strongly reduces the stimulation of NFS2 activity. As to expression, expressed in roots, leaves, stems and flowers.

The protein localises to the plastid. It localises to the chloroplast stroma. It is found in the mitochondrion. It functions in the pathway cofactor biosynthesis; iron-sulfur cluster biosynthesis. Participates in cysteine desulfurization mediated by NFS2 in chloroplast and NIFS1 in mitochondrion. Activates the cysteine desulfurase activity of NFS2. Cysteine desulfurization mobilizes sulfur from L-cysteine to yield L-alanine and supplies the inorganic sulfur for iron-sulfur (Fe-S) cluster formation. Glutaredoxins regulate SUFE1 activity by inducing its reduction and deglutathionylation. This is SufE-like protein 1, chloroplastic/mitochondrial from Arabidopsis thaliana (Mouse-ear cress).